Here is a 120-residue protein sequence, read N- to C-terminus: Large ribosomal subunit protein bL20 (120 aa).

The protein belongs to the bacterial ribosomal protein bL20 family.

In terms of biological role, binds directly to 23S ribosomal RNA and is necessary for the in vitro assembly process of the 50S ribosomal subunit. It is not involved in the protein synthesizing functions of that subunit. This is Large ribosomal subunit protein bL20 from Karelsulcia muelleri (strain GWSS) (Sulcia muelleri).